The primary structure comprises 342 residues: Dihydroorotase (342 aa).

Positions 13 and 15 each coordinate Zn(2+). Substrate contacts are provided by residues histidine 15–arginine 17 and asparagine 41. Positions 98, 135, and 173 each coordinate Zn(2+). N6-carboxylysine is present on lysine 98. Residue histidine 135 coordinates substrate. Residue leucine 218 coordinates substrate. Position 246 (aspartate 246) interacts with Zn(2+). Aspartate 246 is a catalytic residue. Substrate is bound by residues histidine 250 and alanine 262.

Belongs to the metallo-dependent hydrolases superfamily. DHOase family. Class II DHOase subfamily. Homodimer. The cofactor is Zn(2+).

The catalysed reaction is (S)-dihydroorotate + H2O = N-carbamoyl-L-aspartate + H(+). It participates in pyrimidine metabolism; UMP biosynthesis via de novo pathway; (S)-dihydroorotate from bicarbonate: step 3/3. Catalyzes the reversible cyclization of carbamoyl aspartate to dihydroorotate. The polypeptide is Dihydroorotase (Vibrio vulnificus (strain YJ016)).